The sequence spans 311 residues: Methionyl-tRNA formyltransferase (311 aa).

Residue 110–113 (SLLP) participates in (6S)-5,6,7,8-tetrahydrofolate binding.

It belongs to the Fmt family.

The enzyme catalyses L-methionyl-tRNA(fMet) + (6R)-10-formyltetrahydrofolate = N-formyl-L-methionyl-tRNA(fMet) + (6S)-5,6,7,8-tetrahydrofolate + H(+). Functionally, attaches a formyl group to the free amino group of methionyl-tRNA(fMet). The formyl group appears to play a dual role in the initiator identity of N-formylmethionyl-tRNA by promoting its recognition by IF2 and preventing the misappropriation of this tRNA by the elongation apparatus. The chain is Methionyl-tRNA formyltransferase from Streptococcus pyogenes serotype M12 (strain MGAS2096).